The following is a 377-amino-acid chain: Transcription factor EC (377 aa).

The region spanning 169-222 (QKKDNHNLIERRRRYNINYRIKELGTLIPKSNDPDMRWNKGTILKASVEYIKWL) is the bHLH domain. Residues 349-377 (DPLLSSTSPAASKESSRRSSFSTDDGDDL) form a disordered region. Low complexity predominate over residues 353–370 (SSTSPAASKESSRRSSFS).

Belongs to the MiT/TFE family.

The protein resides in the nucleus. Functionally, transcriptional regulator that acts as a repressor or an activator. Binds DNA. This chain is Transcription factor EC (TFEC), found in Gallus gallus (Chicken).